Here is a 481-residue protein sequence, read N- to C-terminus: Delta(14)-sterol reductase ERG24B (481 aa).

Transmembrane regions (helical) follow at residues 11-31 (FGGP…MQVL), 80-100 (LFAY…QIVL), 125-145 (LTGC…WTWI), 149-169 (YIQL…WTYL), 244-264 (TYGF…YYVL), 279-299 (ITSD…VPFL), 313-333 (HLGP…LYIF), and 427-447 (AAPW…FLLI).

Belongs to the ERG4/ERG24 family.

The protein resides in the endoplasmic reticulum membrane. The enzyme catalyses 4,4-dimethyl-5alpha-cholesta-8,24-dien-3beta-ol + NADP(+) = 4,4-dimethyl-5alpha-cholesta-8,14,24-trien-3beta-ol + NADPH + H(+). The protein operates within steroid metabolism; ergosterol biosynthesis. Its function is as follows. Delta(14)-sterol reductase; part of the third module of ergosterol biosynthesis pathway that includes the late steps of the pathway. Catalyzes the reduction of the C14=C15 double bond within 4,4,24-trimethyl ergosta-8,14,24(28)-trienolto produce 4,4-dimethylfecosterol. The third module or late pathway involves the ergosterol synthesis itself through consecutive reactions that mainly occur in the endoplasmic reticulum (ER) membrane. Firstly, the squalene synthase ERG9 catalyzes the condensation of 2 farnesyl pyrophosphate moieties to form squalene, which is the precursor of all steroids. Squalene synthase is crucial for balancing the incorporation of farnesyl diphosphate (FPP) into sterol and nonsterol isoprene synthesis. Secondly, squalene is converted into lanosterol by the consecutive action of the squalene epoxidase ERG1 and the lanosterol synthase ERG7. Then, the delta(24)-sterol C-methyltransferase ERG6 methylates lanosterol at C-24 to produce eburicol. Eburicol is the substrate of the sterol 14-alpha demethylase encoded by CYP51A, CYP51B and CYP51C, to yield 4,4,24-trimethyl ergosta-8,14,24(28)-trienol. CYP51B encodes the enzyme primarily responsible for sterol 14-alpha-demethylation, and plays an essential role in ascospore formation. CYP51A encodes an additional sterol 14-alpha-demethylase, induced on ergosterol depletion and responsible for the intrinsic variation in azole sensitivity. The third CYP51 isoform, CYP51C, does not encode a sterol 14-alpha-demethylase, but is required for full virulence on host wheat ears. The C-14 reductase ERG24 then reduces the C14=C15 double bond which leads to 4,4-dimethylfecosterol. A sequence of further demethylations at C-4, involving the C-4 demethylation complex containing the C-4 methylsterol oxidases ERG25, the sterol-4-alpha-carboxylate 3-dehydrogenase ERG26 and the 3-keto-steroid reductase ERG27, leads to the production of fecosterol via 4-methylfecosterol. ERG28 has a role as a scaffold to help anchor ERG25, ERG26 and ERG27 to the endoplasmic reticulum. The C-8 sterol isomerase ERG2 then catalyzes the reaction which results in unsaturation at C-7 in the B ring of sterols and thus converts fecosterol to episterol. The sterol-C5-desaturases ERG3A and ERG3BB then catalyze the introduction of a C-5 double bond in the B ring to produce 5-dehydroepisterol. The C-22 sterol desaturases ERG5A and ERG5B further convert 5-dehydroepisterol into ergosta-5,7,22,24(28)-tetraen-3beta-ol by forming the C-22(23) double bond in the sterol side chain. Finally, ergosta-5,7,22,24(28)-tetraen-3beta-ol is substrate of the C-24(28) sterol reductase ERG4 to produce ergosterol. The polypeptide is Delta(14)-sterol reductase ERG24B (Gibberella zeae (strain ATCC MYA-4620 / CBS 123657 / FGSC 9075 / NRRL 31084 / PH-1) (Wheat head blight fungus)).